The following is an 843-amino-acid chain: Protein P (843 aa).

Residues 1-177 form a terminal protein domain (TP) region; the sequence is MPLSYPHFRK…FCGSPYSWEQ (177 aa). The segment at 178–346 is spacer; that stretch reads ELQHGSTSLN…YCLSHIINLL (169 aa). Disordered stretches follow at residues 228-259 and 283-314; these read KQGQ…GVEP and EKAN…SVGS. Positions 239–249 are enriched in basic residues; the sequence is RSGRLRSRVHT. Residues 347-690 form a polymerase/reverse transcriptase domain (RT) region; that stretch reads EDWGPCYEHG…YMNLYPVARQ (344 aa). One can recognise a Reverse transcriptase domain in the interval 357–600; the sequence is QHYIRTPRTP…YSLHFMGYVI (244 aa). Positions 429, 551, and 552 each coordinate Mg(2+).

It belongs to the hepadnaviridae P protein family.

The catalysed reaction is DNA(n) + a 2'-deoxyribonucleoside 5'-triphosphate = DNA(n+1) + diphosphate. It carries out the reaction Endonucleolytic cleavage to 5'-phosphomonoester.. Its activity is regulated as follows. Activated by host HSP70 and HSP40 in vitro to be able to bind the epsilon loop of the pgRNA. Because deletion of the RNase H region renders the protein partly chaperone-independent, the chaperones may be needed indirectly to relieve occlusion of the RNA-binding site by this domain. Inhibited by several reverse-transcriptase inhibitors: Lamivudine, Adefovir and Entecavir. Multifunctional enzyme that converts the viral RNA genome into dsDNA in viral cytoplasmic capsids. This enzyme displays a DNA polymerase activity that can copy either DNA or RNA templates, and a ribonuclease H (RNase H) activity that cleaves the RNA strand of RNA-DNA heteroduplexes in a partially processive 3'- to 5'-endonucleasic mode. Neo-synthesized pregenomic RNA (pgRNA) are encapsidated together with the P protein, and reverse-transcribed inside the nucleocapsid. Initiation of reverse-transcription occurs first by binding the epsilon loop on the pgRNA genome, and is initiated by protein priming, thereby the 5'-end of (-)DNA is covalently linked to P protein. Partial (+)DNA is synthesized from the (-)DNA template and generates the relaxed circular DNA (RC-DNA) genome. After budding and infection, the RC-DNA migrates in the nucleus, and is converted into a plasmid-like covalently closed circular DNA (cccDNA). The activity of P protein does not seem to be necessary for cccDNA generation, and is presumably released from (+)DNA by host nuclear DNA repair machinery. This chain is Protein P, found in Homo sapiens (Human).